Consider the following 276-residue polypeptide: Large ribosomal subunit protein uL2 (276 aa).

The disordered stretch occupies residues 223–276; sequence GAAMNPVDHPHGGGEGRAPRGRPPASPWGWQTKGLKTRKRRKPSSRFIIARRKK. Positions 230-240 are enriched in basic and acidic residues; that stretch reads DHPHGGGEGRA. A compositionally biased stretch (basic residues) spans 257–276; it reads LKTRKRRKPSSRFIIARRKK.

This sequence belongs to the universal ribosomal protein uL2 family. Part of the 50S ribosomal subunit. Forms a bridge to the 30S subunit in the 70S ribosome.

In terms of biological role, one of the primary rRNA binding proteins. Required for association of the 30S and 50S subunits to form the 70S ribosome, for tRNA binding and peptide bond formation. It has been suggested to have peptidyltransferase activity; this is somewhat controversial. Makes several contacts with the 16S rRNA in the 70S ribosome. The sequence is that of Large ribosomal subunit protein uL2 from Thermus thermophilus (strain ATCC BAA-163 / DSM 7039 / HB27).